The primary structure comprises 139 residues: D-ribose pyranase (139 aa).

H20 functions as the Proton donor in the catalytic mechanism. Residues D28, H106, and 128–130 (YAN) contribute to the substrate site.

It belongs to the RbsD / FucU family. RbsD subfamily. In terms of assembly, homodecamer.

The protein resides in the cytoplasm. The catalysed reaction is beta-D-ribopyranose = beta-D-ribofuranose. It functions in the pathway carbohydrate metabolism; D-ribose degradation; D-ribose 5-phosphate from beta-D-ribopyranose: step 1/2. Its function is as follows. Catalyzes the interconversion of beta-pyran and beta-furan forms of D-ribose. This is D-ribose pyranase from Maridesulfovibrio salexigens (strain ATCC 14822 / DSM 2638 / NCIMB 8403 / VKM B-1763) (Desulfovibrio salexigens).